The primary structure comprises 1029 residues: Protein translocase subunit SecA (1029 aa).

ATP-binding positions include glutamine 143, 161–165 (GEGKT), and aspartate 661. The interval 953–1029 (EQEQKKSQVQ…GKKYKNCCGK (77 aa)) is disordered. Composition is skewed to basic and acidic residues over residues 966–975 (LVARHEKAET) and 984–996 (PEGRQEKKAENGK). Positions 1015, 1017, 1026, and 1027 each coordinate Zn(2+).

Belongs to the SecA family. As to quaternary structure, monomer and homodimer. Part of the essential Sec protein translocation apparatus which comprises SecA, SecYEG and auxiliary proteins SecDF. Other proteins may also be involved. The cofactor is Zn(2+).

It is found in the cell inner membrane. The protein localises to the cytoplasm. It carries out the reaction ATP + H2O + cellular proteinSide 1 = ADP + phosphate + cellular proteinSide 2.. In terms of biological role, part of the Sec protein translocase complex. Interacts with the SecYEG preprotein conducting channel. Has a central role in coupling the hydrolysis of ATP to the transfer of proteins into and across the cell membrane, serving as an ATP-driven molecular motor driving the stepwise translocation of polypeptide chains across the membrane. The sequence is that of Protein translocase subunit SecA from Chlorobium phaeobacteroides (strain BS1).